We begin with the raw amino-acid sequence, 492 residues long: N-succinylglutamate 5-semialdehyde dehydrogenase (492 aa).

Glycine 220–glycine 225 contacts NAD(+). Residues glutamate 243 and cysteine 277 contribute to the active site.

This sequence belongs to the aldehyde dehydrogenase family. AstD subfamily.

The enzyme catalyses N-succinyl-L-glutamate 5-semialdehyde + NAD(+) + H2O = N-succinyl-L-glutamate + NADH + 2 H(+). It functions in the pathway amino-acid degradation; L-arginine degradation via AST pathway; L-glutamate and succinate from L-arginine: step 4/5. Its function is as follows. Catalyzes the NAD-dependent reduction of succinylglutamate semialdehyde into succinylglutamate. In Escherichia coli O7:K1 (strain IAI39 / ExPEC), this protein is N-succinylglutamate 5-semialdehyde dehydrogenase.